The following is a 355-amino-acid chain: UDP-N-acetylglucosamine--N-acetylmuramyl-(pentapeptide) pyrophosphoryl-undecaprenol N-acetylglucosamine transferase (355 aa).

UDP-N-acetyl-alpha-D-glucosamine-binding positions include 15–17 (TGG), Asn127, Arg163, Ser191, Ile244, 263–268 (ALTVSE), and Gln288.

It belongs to the glycosyltransferase 28 family. MurG subfamily.

The protein resides in the cell inner membrane. It catalyses the reaction di-trans,octa-cis-undecaprenyl diphospho-N-acetyl-alpha-D-muramoyl-L-alanyl-D-glutamyl-meso-2,6-diaminopimeloyl-D-alanyl-D-alanine + UDP-N-acetyl-alpha-D-glucosamine = di-trans,octa-cis-undecaprenyl diphospho-[N-acetyl-alpha-D-glucosaminyl-(1-&gt;4)]-N-acetyl-alpha-D-muramoyl-L-alanyl-D-glutamyl-meso-2,6-diaminopimeloyl-D-alanyl-D-alanine + UDP + H(+). It participates in cell wall biogenesis; peptidoglycan biosynthesis. Functionally, cell wall formation. Catalyzes the transfer of a GlcNAc subunit on undecaprenyl-pyrophosphoryl-MurNAc-pentapeptide (lipid intermediate I) to form undecaprenyl-pyrophosphoryl-MurNAc-(pentapeptide)GlcNAc (lipid intermediate II). In Shigella flexneri serotype 5b (strain 8401), this protein is UDP-N-acetylglucosamine--N-acetylmuramyl-(pentapeptide) pyrophosphoryl-undecaprenol N-acetylglucosamine transferase.